A 158-amino-acid chain; its full sequence is Acireductone dioxygenase (158 aa).

Residues H81, H83, E87, and H126 each coordinate Fe(2+). Ni(2+) is bound by residues H81, H83, E87, and H126.

It belongs to the acireductone dioxygenase (ARD) family. Fe(2+) is required as a cofactor. Ni(2+) serves as cofactor.

Its subcellular location is the cytoplasm. The protein resides in the nucleus. The enzyme catalyses 1,2-dihydroxy-5-(methylsulfanyl)pent-1-en-3-one + O2 = 4-methylsulfanyl-2-oxobutanoate + formate + 2 H(+). It catalyses the reaction 1,2-dihydroxy-5-(methylsulfanyl)pent-1-en-3-one + O2 = 3-(methylsulfanyl)propanoate + CO + formate + 2 H(+). It participates in amino-acid biosynthesis; L-methionine biosynthesis via salvage pathway; L-methionine from S-methyl-5-thio-alpha-D-ribose 1-phosphate: step 5/6. Functionally, catalyzes 2 different reactions between oxygen and the acireductone 1,2-dihydroxy-3-keto-5-methylthiopentene (DHK-MTPene) depending upon the metal bound in the active site. Fe-containing acireductone dioxygenase (Fe-ARD) produces formate and 2-keto-4-methylthiobutyrate (KMTB), the alpha-ketoacid precursor of methionine in the methionine recycle pathway. Ni-containing acireductone dioxygenase (Ni-ARD) produces methylthiopropionate, carbon monoxide and formate, and does not lie on the methionine recycle pathway. The chain is Acireductone dioxygenase from Metarhizium robertsii (strain ARSEF 23 / ATCC MYA-3075) (Metarhizium anisopliae (strain ARSEF 23)).